The following is a 244-amino-acid chain: MSSDSVVAGNISRADVERVVRAVLTRQLAGATTSSGSVSSAGGPPNPLVVNISARHVHLTEEHVEVLFGKGVKLEPMKWLYQDGYYAAKQTVTIFGPRRRMIPDVRVLGPCRNASQVELAFTDGISLGIDLPVRISGDHHDTVGCVLVGPAGVVELKSGVIRAMRHVHMSPADCAYYGVKNGDEMDLKIHSGPCTTTLEHVTVREDKDVKLEVHIDTDEGNAVDLSHATKVELVKPVGCGCHSK.

A CoA-binding site is contributed by 52–54 (ISA). Zn(2+) contacts are provided by His-56 and His-58. Arg-106 contributes to the CoA binding site. Arg-112 lines the phosphate pocket. Zn(2+)-binding residues include Glu-118, His-166, His-168, and His-214. CoA is bound at residue Asn-221.

Belongs to the PduL family. As to quaternary structure, full-length protein forms large oligomers. Possible homotrimer and monomer, when purified in the absence of the encapsulation peptide (EP, residues 1-20). The EP may influence oligomerization. Zn(2+) serves as cofactor.

The protein localises to the bacterial microcompartment. The enzyme catalyses propanoyl-CoA + phosphate = propanoyl phosphate + CoA. In terms of biological role, part of a bacterial microcompartment (BMC) locus required for growth on plant and algal sugars, including L-fucose and L-rhamnose. Thought to be active on lactyl-CoA in a lactaldehyde-degradation pathway. CoA is regenerated within the BMC via this enzyme, although there must also be cofactor transport across the BMC. Directly targeted to the BMC. In Planctopirus limnophila (strain ATCC 43296 / DSM 3776 / IFAM 1008 / Mu 290) (Planctomyces limnophilus), this protein is Phosphate propanoyltransferase.